Consider the following 592-residue polypeptide: Potassium-transporting ATPase potassium-binding subunit (592 aa).

The next 10 helical transmembrane spans lie at 7-27, 60-80, 132-152, 175-195, 279-299, 310-330, 409-429, 449-469, 513-533, and 556-576; these read ILLGIFLVVLLLTVKPLGTYI, LKYACAILLFNVLGVLAVYAL, ALAVQNFFSAATGIVVVIALI, LHVLLPISIIYAVFLTGQGVI, LSNFIQMLSIFLIPAALCFTF, WAVLAAMTLMFVALAYTAMHF, GLYGMLVFAIMAVFIAGLMIG, IAILVTPLLVLVGTAIAVMLA, VMLGIAMWFGRFGVIVPVLAI, and LFVTLLIGTVLLVGLLNYVPA.

The protein belongs to the KdpA family. As to quaternary structure, the system is composed of three essential subunits: KdpA, KdpB and KdpC.

The protein resides in the cell inner membrane. Part of the high-affinity ATP-driven potassium transport (or Kdp) system, which catalyzes the hydrolysis of ATP coupled with the electrogenic transport of potassium into the cytoplasm. This subunit binds the periplasmic potassium ions and delivers the ions to the membrane domain of KdpB through an intramembrane tunnel. The chain is Potassium-transporting ATPase potassium-binding subunit from Dechloromonas aromatica (strain RCB).